Here is a 378-residue protein sequence, read N- to C-terminus: tRNA N(3)-cytidine methyltransferase METTL2B (378 aa).

Ala2 carries the N-acetylalanine modification. At Ser4 the chain carries Phosphoserine. Residues Trp78 and Tyr82 each contribute to the S-adenosyl-L-methionine site. Thr154 is modified (phosphothreonine). S-adenosyl-L-methionine contacts are provided by Gly188, Asp213, Asp239, Leu240, and Ile260.

This sequence belongs to the methyltransferase superfamily. METL family. Monomer. Interacts with DALRD3.

Its subcellular location is the cytoplasm. The enzyme catalyses cytidine(32) in tRNA(Thr) + S-adenosyl-L-methionine = N(3)-methylcytidine(32) in tRNA(Thr) + S-adenosyl-L-homocysteine + H(+). It carries out the reaction cytidine(32) in tRNA(Arg)(CCU) + S-adenosyl-L-methionine = N(3)-methylcytidine(32) in tRNA(Arg)(CCU) + S-adenosyl-L-homocysteine + H(+). Functionally, S-adenosyl-L-methionine-dependent methyltransferase that mediates N(3)-methylcytidine modification of residue 32 of the tRNA anticodon loop of tRNA(Thr)(UGU) and tRNA(Arg)(CCU). This chain is tRNA N(3)-cytidine methyltransferase METTL2B, found in Homo sapiens (Human).